The following is a 589-amino-acid chain: Pyruvate kinase (589 aa).

Substrate is bound at residue Arg-32. K(+) contacts are provided by Asn-34, Ser-36, Asp-66, and Thr-67. 34 to 37 (NFSH) lines the ATP pocket. ATP is bound by residues Arg-73 and Lys-157. Glu-223 is a binding site for Mg(2+). Substrate-binding residues include Gly-246, Asp-247, and Thr-279. Asp-247 provides a ligand contact to Mg(2+).

Belongs to the pyruvate kinase family. The protein in the C-terminal section; belongs to the PEP-utilizing enzyme family. As to quaternary structure, homotetramer. Mg(2+) is required as a cofactor. The cofactor is K(+).

It carries out the reaction pyruvate + ATP = phosphoenolpyruvate + ADP + H(+). Its pathway is carbohydrate degradation; glycolysis; pyruvate from D-glyceraldehyde 3-phosphate: step 5/5. Its activity is regulated as follows. Strongly activated by glucose-6-phosphate, ribose-5-phosphate and fructose-6-phosphate. Weak activator AMP and weak inhibitor fructose-1,6-bisphosphate can act as strong inhibitors in the presence of strong activators. This is Pyruvate kinase (pyk) from Lactobacillus delbrueckii subsp. bulgaricus.